Here is a 428-residue protein sequence, read N- to C-terminus: Cell number regulator 13 (428 aa).

The span at 233–280 (PEKETNVKAPEKKGSNYSESKGETAKSFDDDDDYPKKQNGDYPKKQKD) shows a compositional bias: basic and acidic residues. The disordered stretch occupies residues 233 to 290 (PEKETNVKAPEKKGSNYSESKGETAKSFDDDDDYPKKQNGDYPKKQKDTCSTQRCSSQ). The segment covering 281-290 (TCSTQRCSSQ) has biased composition (polar residues). A helical membrane pass occupies residues 354 to 370 (IMAYSLILSCCCYTCCV).

Expressed in roots, coleoptiles, leaves, stalks, apical meristems, immature ears, embryos, endosperm, pericarp, silks and tassel spikelets. Not detected in pollen.

The protein resides in the membrane. This chain is Cell number regulator 13 (CNR13), found in Zea mays (Maize).